The sequence spans 1711 residues: MAQNAPDCEDTQDFQFKLHHKIVAFKKCGEPRSNVNLLAVSSSRGLLFAGSPTQPELKVIIVKDLVNAKSTAQQPQARLVPLPSIPNYIACSSDGNLLAVNHTQNGTSLLSIYAVLSFMTPDVRPVYNIRLAAEDHVHGVQLLWNPVLPNSLAVVLSNGALAMYALKEGGNFEMHSLDKNQQVKCGCWSPKGKQIVLGFPGGTVKQFKPDLTLAKTLLCPPNIHDAPFDTIAIQWLSTFQFAVIFLQHGEDCSPSLYILNAPKAGAPSYINYYDICYSMNGPRNHQFVFSHVPQWNLLLVVSANGVEVGIMRSTEAGDTPAWQQLTLLDEARIEMPLSEDKDETFPLGFAFDTSTTHQLTINEKKLQTMPMVHVLSSDGELLSFNFLNVLPTAVSVCSPPPPVADTSGQFKPLNMLLASEEEEQPAWAASPSKAPAATPAASSDISFAFTPNTVTSTPAPSKDKQPSLFSGFGAAAAKAPAPQLSFGTAPTSSPVSFGAPTTNAAKPTTPFGGFGTQATTTAMGSMFSASGANAFGGMALNKPAIASVTPRTAAPGSTVPATPASAPANKPLYTVPLTFTPVDTKPATSAPPQIADESLKPDDTEPIIKDMIALQIEAFSKDIQKQKEQTKELLKGIAAPSALRAYAKRLDDLQELNEQAKDVEFELDVQGLRQGLNEAYAIVAECRGKLEIYRKPEITRLMNSSSCDPSGRRMLARLQSYVAANEAQLRLAQQHVDLQWEQFQDVVRRNSKSRMHMPCLEGIYQRLTRLQNLTSNQRIVQNNIKSKLKERGLLQAALLDQEKSRTRTNEAVDTLTDSILTMSLSQVVDSNAAKLTRERLQKIRNIVQLQKINVICPQRPDRVGLKSEVILETKRRAEQIKRAAAKPATANKYTQAAVAPPSPPDVAPTPAVAPMPQATVTVAPPLPKPMPSIPSVVEKPGVPTHPTTPVATPFSFSQSIPFVKTSTVTPTTNTVTPGEAAKPGLSIFGGSTISSFSFGGGAAKSALSFGTGSPAVAAPTPKPNPLSAVEKPTPEPTKPKEQKAAESKEFKAVQPETEESKVPQKPKAETENKSFGFGGFTGTGGTVGNTSSSPFSFGGLGSSLGFGGTAAAVPKSEPSSTATTSVATSASTAPFGIFSAALAKPSNSEPITTVTSNTTTITSKPTNVIASSSVTDAPSVTTTNAVTSSTDPIGGLFSSVTICKPNTPADTTKPANIFGGGLSAGSFSFGGTIDASKGLFGSTKPVATAPTSVTEANNKTDPISTTPSAISTTTATTTVSSPAVVPAAVTAAVPATSSTTVTSSTAVPGSAFSFSNAFSTLSAGGAAAPTTSASAPLAAKSPTATSTGNNSSNSVFGGGFAVATSTAAPVASPFQSAAKSPVSSANIFGSIPKAETSVFGGATTAPSNTTAAATPDAPPAGLFASAAISNPSPFGSPTTRAPASGGNIFGQAVKPSVFGQPAQAGDSGGSIFGGGSASTPFGSSSIFGGGNTQGAVGAPAAGSTSIFGQKVFGQSSAAAPAAGGNIFSNPVGSPQASPFGGGGNSIFGSPATAPPASGGSIFGGGSSSGGFGSFTQTTPAQGGFGGGFGQGGGGSVAQTGFGSPQAPQQQTTTPGGFGAKPVFGGSPAFGASPTFGGGATFGSPKGFGGFGGASPVASPPPFGAAAKPAQGNIFETLGGQESGLSFGNLAQTGNSNAQKPAFGGSSFMNYR.

8 tandem repeats follow at residues 472–473, 486–487, 497–498, 511–512, 514–515, 535–536, 588–589, and 598–599. The interval 472–1703 is 45 X 2 AA repeats of F-G; it reads FGAAAAKAPA…NSNAQKPAFG (1232 aa). Leucine-zipper stretches follow at residues 650 to 672 and 767 to 788; these read LDDL…VQGL and LTRL…KSKL. The disordered stretch occupies residues 886 to 905; it reads KPATANKYTQAAVAPPSPPD. Copy 9 of the repeat occupies 1009–1010; it reads FG. Residues 1012–1081 form a disordered region; it reads GSPAVAAPTP…NKSFGFGGFT (70 aa). Basic and acidic residues-rich tracts occupy residues 1037 to 1051 and 1058 to 1072; these read TKPK…KEFK and EESK…ETEN. The interval 1044–1711 is interaction with emb; that stretch reads AAESKEFKAV…FGGSSFMNYR (668 aa). A run of 8 repeats spans residues 1075–1076, 1077–1078, 1097–1098, 1106–1107, 1135–1136, 1218–1219, 1229–1230, and 1240–1241. The span at 1251–1261 shows a compositional bias: polar residues; that stretch reads TSVTEANNKTD. The disordered stretch occupies residues 1251-1270; that stretch reads TSVTEANNKTDPISTTPSAI. 27 tandem repeats follow at residues 1356-1357, 1388-1389, 1399-1400, 1434-1435, 1449-1450, 1458-1459, 1472-1473, 1481-1482, 1487-1488, 1507-1508, 1512-1513, 1539-1540, 1547-1548, 1562-1563, 1571-1572, 1584-1585, 1588-1589, 1601-1602, 1617-1618, 1623-1624, 1629-1630, 1635-1636, 1641-1642, 1647-1648, 1650-1651, 1662-1663, and 1686-1687. Disordered stretches follow at residues 1533–1552 and 1557–1614; these read SPQA…SPAT and SGGS…TTTP. 2 stretches are compositionally biased toward gly residues: residues 1560-1572 and 1582-1595; these read SIFG…GGFG and GGFG…GGGS. Residues 1596-1614 are compositionally biased toward low complexity; it reads VAQTGFGSPQAPQQQTTTP. Polar residues predominate over residues 1688–1698; the sequence is NLAQTGNSNAQ. Positions 1688–1711 are disordered; the sequence is NLAQTGNSNAQKPAFGGSSFMNYR. Repeat 45 spans residues 1702 to 1703; sequence FG.

As to quaternary structure, component of the nuclear pore complex. Interacts with mbo/Nup88 and (via C-terminus) with emb to attenuate emb-mediated protein export.

It localises to the nucleus. It is found in the nuclear pore complex. The protein localises to the nucleus membrane. Functionally, part of the nuclear pore complex. Serves as a docking site in the receptor-mediated import of substrates across the nuclear pore complex including emb, RanGAP and phosphorylated Mad. Protects mbo/Nup88 from proteasomal degradation at the nuclear pore. Together with mbo/Nup88, sequesters emb in the cytoplasm and thereby attenuates nuclear export signal (NES)-mediated nuclear export. Together with mbo/Nup88, required for the nuclear import of the Rel family transcription factors dorsal (dl) and Dorsal-related immunity factor (Dif) and the activation of an immune response. The sequence is that of Nuclear pore complex protein Nup214 from Drosophila melanogaster (Fruit fly).